Reading from the N-terminus, the 2336-residue chain is Genome polyprotein (2336 aa).

The Peptidase C28 domain occupies 1–201; that stretch reads MNTTDCFIAL…WKAKVQKRLK (201 aa). Residues 1 to 1481 lie on the Cytoplasmic side of the membrane; the sequence is MNTTDCFIAL…SFVKRAFKRL (1481 aa). Catalysis depends on for leader protease activity residues Cys-51, His-148, and Asp-163. Disordered regions lie at residues 197 to 218 and 238 to 265; these read QKRLKGAGQSSPATGSQNQSGN and QLGDNAISGGSNEGSTDTTSTHTTNTQN. Gly-202 carries the N-myristoyl glycine; by host lipid modification. 2 stretches are compositionally biased toward polar residues: residues 204–218 and 238–251; these read GQSSPATGSQNQSGN and QLGDNAISGGSNEG. The span at 252–265 shows a compositional bias: low complexity; that stretch reads STDTTSTHTTNTQN. An antigenic epitope region spans residues 789–797; that stretch reads ALLRAATYY. Positions 869-871 match the Cell attachment site motif; it reads RGD. The region spanning 1190–1354 is the SF3 helicase domain; that stretch reads NVHIANLCKV…DGYKVNNKLD (165 aa). 1218 to 1225 contacts ATP; it reads GKSGQGKS. Residues 1482–1502 lie within the membrane without spanning it; that stretch reads KENFEIVALCLTLLANIVIMI. Over 1503 to 2336 the chain is Cytoplasmic; that stretch reads RETRKRQQMV…NAVCGDAQSL (834 aa). Residues 1556–1591 form a disordered region; the sequence is PGHRASDDVNSEPARPVEEQPQAEGPYTGPLERQKP. Residues Tyr-1582, Tyr-1605, and Tyr-1629 each carry the O-(5'-phospho-RNA)-tyrosine modification. The Peptidase C3 domain occupies 1653 to 1849; the sequence is APPTDLQKMV…YCSCVSRSML (197 aa). His-1696 acts as the For protease 3C activity; Proton donor/acceptor in catalysis. Residues Asp-1734 and Cys-1813 each act as for protease 3C activity in the active site. The Nuclear localization signal motif lies at 1879–1887; the sequence is MRKTKLAPT. In terms of domain architecture, RdRp catalytic spans 2097 to 2215; the sequence is KNVWDVDYSA…ASDYDLDFEA (119 aa). Asp-2201 (for RdRp activity) is an active-site residue.

The protein belongs to the picornaviruses polyprotein family. As to quaternary structure, interacts with host ISG15. Interacts (via R-G-D motif) with host ITGAV/ITGB6. Interacts with host MAVS; this interaction inhibits binding of host TRAF3 to MAVS, thereby suppressing interferon-mediated responses. In terms of assembly, forms homooligomers. As to quaternary structure, homohexamer. Interacts with host VIM. Interacts with host BECN1. Interacts with host DCTN3. In terms of assembly, interacts with RNA-dependent RNA polymerase; this interaction allows 3B-1 to binds 2 polymerases and act as a primer. It also allows the recruitment of the RNA-dependent RNA polymerase to host membranes. As to quaternary structure, interacts with RNA-dependent RNA polymerase; this interaction allows 3B-2 to act as a primer. Interacts with RNA-dependent RNA polymerase; this interaction allows 3B-3 to act as a primer. In terms of assembly, interacts with 3B-1; this interaction allows 3B-1 to binds 2 polymerases and act as a primer. It also allows the recruitment of the RNA-dependent RNA polymerase to host membranes. Interacts with 3B-2; this interaction allows 3B-2 to act as a primer. Interacts with 3B-3; this interaction allows 3B-3 to act as a primer. In terms of processing, removes six residues from its own C-terminus, generating sLb(pro). Specific enzymatic cleavages in vivo by the viral proteases yield a variety of precursors and mature proteins. The polyprotein seems to be cotranslationally cleaved at the 2A/2B junction by a ribosomal skip from one codon to the next without formation of a peptide bond. This process would release the L-P1-2A peptide from the translational complex. Post-translationally, during virion maturation, immature virions are rendered infectious following cleavage of VP0 into VP4 and VP2. This maturation seems to be an autocatalytic event triggered by the presence of RNA in the capsid and is followed by a conformational change of the particle. In terms of processing, myristoylation is required during RNA encapsidation and formation of the mature virus particle. Uridylylated by the polymerase and covalently linked to the 5'-end of genomic RNA. These uridylylated forms act as a nucleotide-peptide primer for the polymerase.

It is found in the host nucleus. It localises to the host cytoplasm. The protein resides in the virion. Its subcellular location is the host endoplasmic reticulum membrane. The protein localises to the host cytoplasmic vesicle membrane. The enzyme catalyses Autocatalytically cleaves itself from the polyprotein of the foot-and-mouth disease virus by hydrolysis of a Lys-|-Gly bond, but then cleaves host cell initiation factor eIF-4G at bonds -Gly-|-Arg- and -Lys-|-Arg-.. It carries out the reaction a ribonucleoside 5'-triphosphate + H2O = a ribonucleoside 5'-diphosphate + phosphate + H(+). The catalysed reaction is RNA(n) + a ribonucleoside 5'-triphosphate = RNA(n+1) + diphosphate. It catalyses the reaction Selective cleavage of Gln-|-Gly bond in the poliovirus polyprotein. In other picornavirus reactions Glu may be substituted for Gln, and Ser or Thr for Gly.. Functionally, autocatalytically cleaves itself from the polyprotein at the L/VP0 junction. Also cleaves the host translation initiation factors EIF4G1 and EIF4G3, in order to shut off the capped cellular mRNA transcription. Plays a role in counteracting host innate antiviral response using diverse mechanisms. Possesses a deubiquitinase activity acting on both 'Lys-48' and 'Lys-63'-linked polyubiquitin chains. In turn, inhibits the ubiquitination and subsequent activation of key signaling molecules of type I IFN response such as host RIGI, TBK1, TRAF3 and TRAF6. Inhibits host NF-kappa-B activity by inducing a decrease in RELA mRNA levels. Cleaves a peptide bond in the C-terminus of host ISG15, resulting in the damaging of this modifier that can no longer be attached to target proteins. Also cleaves host G3BP1 and G3BP2 in order to inhibit cytoplasmic stress granules assembly. Lies on the inner surface of the capsid shell. After binding to the host receptor, the capsid undergoes conformational changes. Capsid protein VP4 is released, capsid protein VP1 N-terminus is externalized, and together, they shape a pore in the host membrane through which the viral genome is translocated into the host cell cytoplasm. After genome has been released, the channel shrinks. In terms of biological role, forms an icosahedral capsid of pseudo T=3 symmetry with capsid proteins VP1 and VP3. The capsid is composed of 60 copies of each capsid protein organized in the form of twelve pentamers and encloses the viral positive strand RNA genome. Upon acidifcation in the endosome, dissociates into pentamers. Its function is as follows. Forms an icosahedral capsid of pseudo T=3 symmetry with capsid proteins VP0 and VP3. The capsid is composed of 60 copies of each capsid protein organized in the form of twelve pentamers and encloses the viral positive strand RNA genome. Upon acidifcation in the endosome, dissociates into pentamers. Functionally, forms an icosahedral capsid of pseudo T=3 symmetry with capsid proteins VP2 and VP3. The capsid is composed of 60 copies of each capsid protein organized in the form of twelve pentamers and encloses the viral positive strand RNA genome. Mediates cell entry by attachment to an integrin receptor, usually host ITGAV/ITGB6. In addition, targets host MAVS to suppress type I IFN pathway. Upon acidifcation in the endosome, dissociates into pentamers. Mediates self-processing of the polyprotein by a translational effect termed 'ribosome skipping'. Mechanistically, 2A-mediated cleavage occurs between the C-terminal glycine and the proline of the downstream protein 2B. In the case of foot-and-mouth disease virus, the 2A oligopeptide is post-translationally 'trimmed' from the C-terminus of the upstream protein 1D by 3C proteinase. In terms of biological role, plays an essential role in the virus replication cycle by acting as a viroporin. Creates a pore in the host endoplasmic reticulum and as a consequence releases Ca2+ in the cytoplasm of infected cell. In turn, high levels of cytoplasmic calcium may trigger membrane trafficking and transport of viral ER-associated proteins to viroplasms, sites of viral genome replication. Its function is as follows. Associates with and induces structural rearrangements of intracellular membranes. Triggers host autophagy by interacting with host BECN1 and thereby promotes viral replication. Participates in viral replication and interacts with host DHX9. Displays RNA-binding, nucleotide binding and NTPase activities. May play a role in virion morphogenesis and viral RNA encapsidation by interacting with the capsid protein VP3. Functionally, plays important roles in virus replication, virulence and host range. Cooperates with host DDX56 to inhibit IRF3 nuclear translocation and subsequent type I interferon production. Covalently linked to the 5'-end of both the positive-strand and negative-strand genomic RNAs. Acts as a genome-linked replication primer. In terms of biological role, cysteine protease that generates mature viral proteins from the precursor polyprotein. In addition to its proteolytic activity, binds to viral RNA and thus influences viral genome replication. RNA and substrate bind cooperatively to the protease. Its function is as follows. RNA-directed RNA polymerase 3D-POL replicates genomic and antigenomic RNA by recognizing replications specific signals. Covalently attaches UMP to a tyrosine of VPg, which is used to prime RNA synthesis. The positive stranded RNA genome is first replicated at virus induced membranous vesicles, creating a dsRNA genomic replication form. This dsRNA is then used as template to synthesize positive stranded RNA genomes. ss(+)RNA genomes are either translated, replicated or encapsidated. In Foot-and-mouth disease virus (isolate -/Azerbaijan/A22-550/1965 serotype A) (FMDV), this protein is Genome polyprotein.